The sequence spans 192 residues: Succinate dehydrogenase cytochrome b560 subunit, mitochondrial (192 aa).

Residues 1-27 (MFGRTLNTFTSRNAPLVRNFDKFIVNN) constitute a mitochondrion transit peptide. The Mitochondrial matrix segment spans residues 48–83 (YSTQAKKPFTITEKRIDELKTPYQPTSPHLTIYKFP). A helical membrane pass occupies residues 84–113 (LPAVMSIMHRATGICLALGITGLAGVTLFA). Topologically, residues 114 to 131 (PHDAIHYIQLLHTQYPAL) are mitochondrial intermembrane. Residues 132 to 156 (VYPAKFAVALPLTYHFCTGVRHIIW) form a helical membrane-spanning segment. A heme b-binding site is contributed by His146. The Mitochondrial matrix portion of the chain corresponds to 157-164 (DETVKGLS). A helical transmembrane segment spans residues 165 to 186 (ISQIESSGKVLLAVVAVLSTIF). Topologically, residues 187-189 (TFV) are mitochondrial intermembrane.

It belongs to the cytochrome b560 family. As to quaternary structure, component of complex II composed of four subunits: the flavoprotein (FP) sdha, iron-sulfur protein (IP) sdhb, and a cytochrome b560 composed of sdhc and sdhd. Heme b serves as cofactor.

The protein resides in the mitochondrion inner membrane. It functions in the pathway carbohydrate metabolism; tricarboxylic acid cycle. Membrane-anchoring subunit of succinate dehydrogenase (SDH) that is involved in complex II of the mitochondrial electron transport chain and is responsible for transferring electrons from succinate to ubiquinone (coenzyme Q). This is Succinate dehydrogenase cytochrome b560 subunit, mitochondrial (sdhC) from Dictyostelium discoideum (Social amoeba).